Here is a 132-residue protein sequence, read N- to C-terminus: Putative RNase AF_2433 (132 aa).

Catalysis depends on residues Arg-90 and His-95. The short motif at 90 to 97 (RNWLVHRY) is the RX(4)HXY motif element. Tyr-97 carries the post-translational modification O-di-AMP-tyrosine.

This sequence belongs to the HepT RNase toxin family. As to quaternary structure, homodimer, probably forms a complex with cognate antitoxin AF_2432. Modified by cognate antitoxin AF_2432; probably at least 2 successive AMPylation events occur on Tyr-97.

Probable toxic component of a putative type VII toxin-antitoxin (TA) system, probably an RNase. Probably neutralized by cognate antitoxin AF_2432. Neutralization may be due to AMPylation by AF_2432. The protein is Putative RNase AF_2433 of Archaeoglobus fulgidus (strain ATCC 49558 / DSM 4304 / JCM 9628 / NBRC 100126 / VC-16).